An 89-amino-acid chain; its full sequence is Small ribosomal subunit protein uS17 (89 aa).

This sequence belongs to the universal ribosomal protein uS17 family. Part of the 30S ribosomal subunit.

Functionally, one of the primary rRNA binding proteins, it binds specifically to the 5'-end of 16S ribosomal RNA. The protein is Small ribosomal subunit protein uS17 of Coxiella burnetii (strain Dugway 5J108-111).